Consider the following 256-residue polypeptide: Probable ABC transporter ATP-binding protein spyM18_0273 (256 aa).

The ABC transporter domain occupies 4–246 (LEINNLHVSI…EKEGYAGIAQ (243 aa)). Residue 36–43 (GPNGTGKS) coordinates ATP.

The protein belongs to the ABC transporter superfamily. Ycf16 family.

The protein localises to the cell membrane. The protein is Probable ABC transporter ATP-binding protein spyM18_0273 of Streptococcus pyogenes serotype M18 (strain MGAS8232).